Consider the following 221-residue polypeptide: Small ribosomal subunit protein uS4c (221 aa).

A disordered region spans residues 26-53 (RKRTDNRCMPGQHRKKRNDSTKKTKNSK). The span at 37-53 (QHRKKRNDSTKKTKNSK) shows a compositional bias: basic residues. Residues 103–161 (MRLDNIVFRLGMAPTIPAARQLVNHGHIVVNNKKVDISSYQCQSQDVISVTKNKTIRTL) enclose the S4 RNA-binding domain.

This sequence belongs to the universal ribosomal protein uS4 family. Part of the 30S ribosomal subunit. Contacts protein S5. The interaction surface between S4 and S5 is involved in control of translational fidelity.

It localises to the plastid. Its subcellular location is the chloroplast. One of the primary rRNA binding proteins, it binds directly to 16S rRNA where it nucleates assembly of the body of the 30S subunit. Its function is as follows. With S5 and S12 plays an important role in translational accuracy. This chain is Small ribosomal subunit protein uS4c (rps4), found in Pleurastrum terricola (Filamentous green alga).